The chain runs to 128 residues: Glycine cleavage system H protein (128 aa).

The region spanning 25–107 is the Lipoyl-binding domain; the sequence is TITVGITHHA…YGAGWFFKLK (83 aa). Position 66 is an N6-lipoyllysine (lysine 66).

This sequence belongs to the GcvH family. As to quaternary structure, the glycine cleavage system is composed of four proteins: P, T, L and H. The cofactor is (R)-lipoate.

The glycine cleavage system catalyzes the degradation of glycine. The H protein shuttles the methylamine group of glycine from the P protein to the T protein. The chain is Glycine cleavage system H protein from Neisseria meningitidis serogroup B (strain ATCC BAA-335 / MC58).